A 466-amino-acid chain; its full sequence is Argininosuccinate lyase (466 aa).

It belongs to the lyase 1 family. Argininosuccinate lyase subfamily.

It localises to the cytoplasm. The enzyme catalyses 2-(N(omega)-L-arginino)succinate = fumarate + L-arginine. Its pathway is amino-acid biosynthesis; L-arginine biosynthesis; L-arginine from L-ornithine and carbamoyl phosphate: step 3/3. The polypeptide is Argininosuccinate lyase (Brucella canis (strain ATCC 23365 / NCTC 10854 / RM-666)).